Consider the following 238-residue polypeptide: Outer membrane protein A (238 aa).

5 beta stranded membrane-spanning segments follow: residues 1–8 (LTAKLGYP), 13–21 (LDIYTRLGG), 43–52 (PVFAGGVEYA), 57–64 (IATRLEYQ), and 83–91 (LLSVGVSYR). A run of 3 repeats spans residues 104-105 (AP), 106-107 (AP), and 108-109 (AP). A 3 X 2 AA tandem repeats of A-P region spans residues 104-109 (APAPAP). The region spanning 111 to 238 (VQTKHFTLKS…RRVEIEVKGI (128 aa)) is the OmpA-like domain. Residues Cys212 and Cys224 are joined by a disulfide bond.

The protein belongs to the outer membrane OOP (TC 1.B.6) superfamily. OmpA family. As to quaternary structure, monomer and homodimer.

The protein resides in the cell outer membrane. Its function is as follows. With TolR probably plays a role in maintaining the position of the peptidoglycan cell wall in the periplasm. Acts as a porin with low permeability that allows slow penetration of small solutes; an internal gate slows down solute passage. In Citrobacter freundii, this protein is Outer membrane protein A.